The primary structure comprises 119 residues: Beta-2-microglobulin (119 aa).

The N-terminal stretch at 1–20 (MARFVAVALLVLLSLSGLET) is a signal peptide. In terms of domain architecture, Ig-like C1-type spans 25-114 (PKIQVYSRHP…VTFSTPKTVK (90 aa)). Cys45 and Cys100 are disulfide-bonded.

The protein belongs to the beta-2-microglobulin family. In terms of assembly, heterodimer of an alpha chain and a beta chain. Beta-2-microglobulin is the beta-chain of major histocompatibility complex class I molecules.

The protein resides in the secreted. Functionally, component of the class I major histocompatibility complex (MHC). Involved in the presentation of peptide antigens to the immune system. This chain is Beta-2-microglobulin (B2M), found in Callicebus personatus personatus (Masked titi).